Here is a 437-residue protein sequence, read N- to C-terminus: Serine carboxypeptidase-like 17 (437 aa).

An N-terminal signal peptide occupies residues 1 to 26 (MGKECYYLSWILKFHLLLVLIQLVDS). 3 disulfides stabilise this stretch: C85–C327, C249–C263, and C287–C293. N106 is a glycosylation site (N-linked (GlcNAc...) asparagine). S181 is a catalytic residue. D362 is a catalytic residue. The N-linked (GlcNAc...) asparagine glycan is linked to N378. H415 is an active-site residue.

This sequence belongs to the peptidase S10 family. Expressed in seedlings and siliques.

Its subcellular location is the secreted. Its function is as follows. Probable carboxypeptidase. This chain is Serine carboxypeptidase-like 17 (SCPL17), found in Arabidopsis thaliana (Mouse-ear cress).